Reading from the N-terminus, the 192-residue chain is Erythropoietin (192 aa).

Positions 1 to 27 (MGVHECPAWLWLLLSLVSLPLGLPVPG) are cleaved as a signal peptide. Cystine bridges form between Cys-34-Cys-187 and Cys-56-Cys-60. A glycan (N-linked (GlcNAc...) asparagine) is linked at Asn-51. Residues Asn-65 and Asn-110 are each glycosylated (N-linked (GlcNAc...) asparagine). O-linked (GalNAc...) serine glycosylation is present at Ser-152.

Belongs to the EPO/TPO family. As to expression, produced by kidney or liver of adult mammals and by liver of fetal or neonatal mammals.

The protein resides in the secreted. Its function is as follows. Hormone involved in the regulation of erythrocyte proliferation and differentiation and the maintenance of a physiological level of circulating erythrocyte mass. Binds to EPOR leading to EPOR dimerization and JAK2 activation thereby activating specific downstream effectors, including STAT1 and STAT3. This is Erythropoietin (EPO) from Macaca mulatta (Rhesus macaque).